The sequence spans 144 residues: 3-hydroxyacyl-[acyl-carrier-protein] dehydratase FabZ (144 aa).

The active site involves His-51.

The protein belongs to the thioester dehydratase family. FabZ subfamily.

Its subcellular location is the cytoplasm. It catalyses the reaction a (3R)-hydroxyacyl-[ACP] = a (2E)-enoyl-[ACP] + H2O. Involved in unsaturated fatty acids biosynthesis. Catalyzes the dehydration of short chain beta-hydroxyacyl-ACPs and long chain saturated and unsaturated beta-hydroxyacyl-ACPs. This Clostridium botulinum (strain Langeland / NCTC 10281 / Type F) protein is 3-hydroxyacyl-[acyl-carrier-protein] dehydratase FabZ.